Here is a 346-residue protein sequence, read N- to C-terminus: Elongation factor 1-alpha (346 aa).

One can recognise a tr-type G domain in the interval 1 to 127 (GTSQADVALL…DNVEPPKRPS (127 aa)). Residue 49–52 (NKMD) coordinates GTP.

Belongs to the TRAFAC class translation factor GTPase superfamily. Classic translation factor GTPase family. EF-Tu/EF-1A subfamily.

The protein resides in the cytoplasm. In terms of biological role, this protein promotes the GTP-dependent binding of aminoacyl-tRNA to the A-site of ribosomes during protein biosynthesis. In Eimeria bovis, this protein is Elongation factor 1-alpha.